A 212-amino-acid chain; its full sequence is ECF RNA polymerase sigma factor SigD (212 aa).

The segment at 49-119 is sigma-70 factor domain-2; it reads ETIRPIVVRY…VADAHRAAGR (71 aa). The Polymerase core binding signature appears at 75–78; the sequence is DVAQ. The sigma-70 factor domain-4 stretch occupies residues 152 to 201; sequence NELLEILPAKQREILILRVVVGLSAEETAAAVGSTTGAVRVAQHRALQRL. The H-T-H motif DNA-binding region spans 176-195; that stretch reads AEETAAAVGSTTGAVRVAQH.

This sequence belongs to the sigma-70 factor family. ECF subfamily. As to quaternary structure, interacts transiently with the RNA polymerase catalytic core formed by RpoA, RpoB, RpoC and RpoZ (2 alpha, 1 beta, 1 beta' and 1 omega subunit) to form the RNA polymerase holoenzyme that can initiate transcription. Interacts (via sigma-70 factor domain 4) with RsdA.

Its function is as follows. Sigma factors are initiation factors that promote the attachment of RNA polymerase to specific initiation sites and are then released. Extracytoplasmic function (ECF) sigma factors are held in an inactive form by an anti-sigma factor until released by regulated intramembrane proteolysis. The polypeptide is ECF RNA polymerase sigma factor SigD (sigD) (Mycobacterium bovis (strain ATCC BAA-935 / AF2122/97)).